Reading from the N-terminus, the 142-residue chain is Large ribosomal subunit protein bL17 (142 aa).

Belongs to the bacterial ribosomal protein bL17 family. In terms of assembly, part of the 50S ribosomal subunit. Contacts protein L32.

The sequence is that of Large ribosomal subunit protein bL17 from Wolbachia sp. subsp. Brugia malayi (strain TRS).